Reading from the N-terminus, the 362-residue chain is Spermidine/putrescine import ATP-binding protein PotA (362 aa).

The ABC transporter domain maps to 6–236 (VELKHVGKRY…PVNHFVADFI (231 aa)). Residue 38-45 (GPSGSGKT) participates in ATP binding.

It belongs to the ABC transporter superfamily. Spermidine/putrescine importer (TC 3.A.1.11.1) family. The complex is composed of two ATP-binding proteins (PotA), two transmembrane proteins (PotB and PotC) and a solute-binding protein (PotD).

Its subcellular location is the cell membrane. The catalysed reaction is ATP + H2O + polyamine-[polyamine-binding protein]Side 1 = ADP + phosphate + polyamineSide 2 + [polyamine-binding protein]Side 1.. Its function is as follows. Part of the ABC transporter complex PotABCD involved in spermidine/putrescine import. Responsible for energy coupling to the transport system. The sequence is that of Spermidine/putrescine import ATP-binding protein PotA from Lacticaseibacillus paracasei (strain ATCC 334 / BCRC 17002 / CCUG 31169 / CIP 107868 / KCTC 3260 / NRRL B-441) (Lactobacillus paracasei).